Consider the following 333-residue polypeptide: Taste receptor type 2 member 38 (333 aa).

The Extracellular segment spans residues 1–17 (MLTLTRIHTVSYEVRST). A helical membrane pass occupies residues 18 to 38 (FLFISVLEFAVGFLTNAFVFL). Residues 39–55 (VNFWDVVKRQPLSNSDC) lie on the Cytoplasmic side of the membrane. Residues 56–76 (VLLCLSISRLFLHGLLFLSAI) form a helical membrane-spanning segment. The Extracellular segment spans residues 77 to 94 (QLTHFQKLSEPLNHSYQA). Residues 95–115 (IIMLWMIANQANLWLAACLSL) form a helical membrane-spanning segment. Residues 116-142 (LYCSKLIRFSHTFLICLASWVSRKISQ) are Cytoplasmic-facing. The helical transmembrane segment at 143–163 (MLLGIILCSCICTVLCVWCFF) threads the bilayer. Residues 164 to 190 (SRPHFTVTTVLFMNNNTRLNWQIKDLN) lie on the Extracellular side of the membrane. Asparagine 178 is a glycosylation site (N-linked (GlcNAc...) asparagine). The helical transmembrane segment at 191–211 (LFYSFLFCYLWSVPPFLLFLV) threads the bilayer. Residues 212 to 251 (SSGMLTVSLGRHMRTMKVYTRDSRDPSLEAHIKALKSLVS) lie on the Cytoplasmic side of the membrane. A helical membrane pass occupies residues 252–272 (FFCFFVISSCAAFISVPLLIL). At 273–276 (WRDK) the chain is on the extracellular side. The helical transmembrane segment at 277 to 297 (IGVMVCVGIMAACPSGHAAVL) threads the bilayer. The Cytoplasmic portion of the chain corresponds to 298–333 (ISGNAKLRRAVTTILLWAQSSLKVRADHKADSRTLC).

The protein belongs to the G-protein coupled receptor T2R family.

The protein localises to the membrane. Receptor that may play a role in the perception of bitterness and is gustducin-linked. May play a role in sensing the chemical composition of the gastrointestinal content. The activity of this receptor may stimulate alpha gustducin, mediate PLC-beta-2 activation and lead to the gating of TRPM5. This is Taste receptor type 2 member 38 (TAS2R38) from Pan troglodytes (Chimpanzee).